The primary structure comprises 110 residues: Large ribosomal subunit protein uL22 (110 aa).

This sequence belongs to the universal ribosomal protein uL22 family. Part of the 50S ribosomal subunit.

This protein binds specifically to 23S rRNA; its binding is stimulated by other ribosomal proteins, e.g. L4, L17, and L20. It is important during the early stages of 50S assembly. It makes multiple contacts with different domains of the 23S rRNA in the assembled 50S subunit and ribosome. Its function is as follows. The globular domain of the protein is located near the polypeptide exit tunnel on the outside of the subunit, while an extended beta-hairpin is found that lines the wall of the exit tunnel in the center of the 70S ribosome. In Alkaliphilus oremlandii (strain OhILAs) (Clostridium oremlandii (strain OhILAs)), this protein is Large ribosomal subunit protein uL22.